The primary structure comprises 176 residues: Isopentenyl-diphosphate Delta-isomerase (176 aa).

Residues histidine 22 and histidine 28 each contribute to the Mn(2+) site. In terms of domain architecture, Nudix hydrolase spans 26–160; sequence LRHKAVSVFV…PERYTPWLRI (135 aa). Residue cysteine 62 is part of the active site. Residue histidine 64 participates in Mn(2+) binding. Glutamate 82 lines the Mg(2+) pocket. 2 residues coordinate Mn(2+): glutamate 108 and glutamate 110. Residue glutamate 110 is part of the active site.

Belongs to the IPP isomerase type 1 family. The cofactor is Mg(2+). Requires Mn(2+) as cofactor.

The protein localises to the cytoplasm. It carries out the reaction isopentenyl diphosphate = dimethylallyl diphosphate. Its pathway is isoprenoid biosynthesis; dimethylallyl diphosphate biosynthesis; dimethylallyl diphosphate from isopentenyl diphosphate: step 1/1. It functions in the pathway porphyrin-containing compound metabolism; chlorophyll biosynthesis. Functionally, catalyzes the 1,3-allylic rearrangement of the homoallylic substrate isopentenyl (IPP) to its highly electrophilic allylic isomer, dimethylallyl diphosphate (DMAPP). The protein is Isopentenyl-diphosphate Delta-isomerase of Dinoroseobacter shibae (strain DSM 16493 / NCIMB 14021 / DFL 12).